The chain runs to 381 residues: Succinyl-diaminopimelate desuccinylase (381 aa).

H70 contacts Zn(2+). Residue D72 is part of the active site. Residue D103 coordinates Zn(2+). E136 acts as the Proton acceptor in catalysis. Zn(2+)-binding residues include E137, E165, and H354.

The protein belongs to the peptidase M20A family. DapE subfamily. As to quaternary structure, homodimer. Zn(2+) is required as a cofactor. It depends on Co(2+) as a cofactor.

It carries out the reaction N-succinyl-(2S,6S)-2,6-diaminopimelate + H2O = (2S,6S)-2,6-diaminopimelate + succinate. It functions in the pathway amino-acid biosynthesis; L-lysine biosynthesis via DAP pathway; LL-2,6-diaminopimelate from (S)-tetrahydrodipicolinate (succinylase route): step 3/3. Catalyzes the hydrolysis of N-succinyl-L,L-diaminopimelic acid (SDAP), forming succinate and LL-2,6-diaminopimelate (DAP), an intermediate involved in the bacterial biosynthesis of lysine and meso-diaminopimelic acid, an essential component of bacterial cell walls. In Roseobacter denitrificans (strain ATCC 33942 / OCh 114) (Erythrobacter sp. (strain OCh 114)), this protein is Succinyl-diaminopimelate desuccinylase.